Here is a 352-residue protein sequence, read N- to C-terminus: C-C chemokine receptor type 5 (352 aa).

At 1–30 (MDYQVSSPTYDIDYDTSEPCQKINVKQIAA) the chain is on the extracellular side. Position 3 is a sulfotyrosine (tyrosine 3). Serine 6 and serine 7 each carry an O-linked (GalNAc...) serine glycan. Residues tyrosine 10 and tyrosine 14 each carry the sulfotyrosine modification. Disulfide bonds link cysteine 20–cysteine 269 and cysteine 101–cysteine 178. The helical transmembrane segment at 31 to 58 (RLLPPLYSLVFIFGFVGNMLVILVLINC) threads the bilayer. At 59–68 (KRLKSMTDIY) the chain is on the cytoplasmic side. A helical membrane pass occupies residues 69–89 (LLNLAISDLFFLLTVPFWAHY). At 90 to 102 (AAAQWDFGNTMCQ) the chain is on the extracellular side. The chain crosses the membrane as a helical span at residues 103-124 (LLTGLYFIGFFSGIFFIILLTI). Residues 125–141 (DRYLAIVHAVFALKART) lie on the Cytoplasmic side of the membrane. Residues 142–166 (VTFGVVTSVITWVVAVFASLPGIIF) traverse the membrane as a helical segment. Residues 167 to 198 (TRSQKEGLHYTCSSHFPYSQYQFWKNFQTLKI) are Extracellular-facing. The chain crosses the membrane as a helical span at residues 199 to 218 (VILGLVLPLLVMVICYSGIL). Residues 219 to 235 (KTLLRCRNEKKRHRAVR) are Cytoplasmic-facing. The chain crosses the membrane as a helical span at residues 236–260 (LIFTIMIVYFLFWAPYNIVLLLNTF). At 261–277 (QEFFGLNNCSSSNRLDQ) the chain is on the extracellular side. Residues 278–301 (AMQVTETLGMTHCCINPIIYAFVG) traverse the membrane as a helical segment. The Cytoplasmic segment spans residues 302–352 (EKFRNYLLVFFQKHIAKHFCKCCSIFQQEAPERASSVYTRSTGEQEISVGL). 3 S-palmitoyl cysteine lipidation sites follow: cysteine 321, cysteine 323, and cysteine 324. A phosphoserine; by BARK1 mark is found at serine 336, serine 337, serine 342, and serine 349.

It belongs to the G-protein coupled receptor 1 family. Interacts with PRAF2. Efficient ligand binding to CCL3/MIP-1alpha and CCL4/MIP-1beta requires sulfation, O-glycosylation and sialic acid modifications. Glycosylation on Ser-6 is required for efficient binding of CCL4. Interacts with GRK2. Interacts with ARRB1 and ARRB2. Interacts with CNIH4. Interacts with S100A4; this interaction stimulates T-lymphocyte chemotaxis. In terms of processing, sulfated on at least 2 of the N-terminal tyrosines. Sulfation is required for efficient binding of the chemokines, CCL3 and CCL4. Palmitoylation in the C-terminal is important for cell surface expression. Post-translationally, phosphorylation on serine residues in the C-terminal is stimulated by binding CC chemokines especially by APO-RANTES. In terms of processing, O-glycosylated, but not N-glycosylated. Ser-6 appears to be the major site even if Ser-7 may be also O-glycosylated. Also sialylated glycans present which contribute to chemokine binding. Thr-16 and Ser-17 may also be glycosylated and, if so, with small moieties such as a T-antigen.

It localises to the cell membrane. Receptor for a number of inflammatory CC-chemokines including CCL3/MIP-1-alpha, CCL4/MIP-1-beta and RANTES and subsequently transduces a signal by increasing the intracellular calcium ion level. May play a role in the control of granulocytic lineage proliferation or differentiation. Participates in T-lymphocyte migration to the infection site by acting as a chemotactic receptor. This is C-C chemokine receptor type 5 (CCR5) from Nomascus leucogenys (Northern white-cheeked gibbon).